The chain runs to 296 residues: MAITAAMVKDLRETTGAGMMDAKKALTETNGDMEAAIDWLRTKGLAKAAKKSGRVAAEGLVGVAVRAGRGVAVELNSETDFVAKNADFQQLVRDITNVALDAATDVEVLKATHLNGRPVDDVLTDAIARIGENMTLRRLHALEGDTIVSYVHNAAAEGMGKIGVLVALKGDAAKAQEIGKQIAMHIAATNPASLSEADLDPALVEREKSVLSEQARESGKPEAVIEKMIEGRMKKFFEEVTLLGQKFVINPDVTVAQAAQEAGVEVTGYARVVVGEGIEKKEEDFAAEVAKTRAGA.

The tract at residues 79–82 (TDFV) is involved in Mg(2+) ion dislocation from EF-Tu.

This sequence belongs to the EF-Ts family.

It is found in the cytoplasm. In terms of biological role, associates with the EF-Tu.GDP complex and induces the exchange of GDP to GTP. It remains bound to the aminoacyl-tRNA.EF-Tu.GTP complex up to the GTP hydrolysis stage on the ribosome. The sequence is that of Elongation factor Ts from Paracoccus denitrificans (strain Pd 1222).